The following is a 177-amino-acid chain: Large ribosomal subunit protein uL6 (177 aa).

Residue lysine 44 is modified to N6-acetyllysine.

It belongs to the universal ribosomal protein uL6 family. As to quaternary structure, part of the 50S ribosomal subunit.

Its function is as follows. This protein binds to the 23S rRNA, and is important in its secondary structure. It is located near the subunit interface in the base of the L7/L12 stalk, and near the tRNA binding site of the peptidyltransferase center. The sequence is that of Large ribosomal subunit protein uL6 from Shigella sonnei (strain Ss046).